A 580-amino-acid polypeptide reads, in one-letter code: Putative ankyrin repeat protein L63 (580 aa).

ANK repeat units follow at residues S81 to I110, D111 to A140, N141 to A170, N172 to A200, D202 to K230, S314 to A339, S340 to C369, G370 to S399, G400 to A429, N431 to A459, D461 to A489, G490 to A519, D521 to A549, and N551 to P579.

This is Putative ankyrin repeat protein L63 from Acanthamoeba polyphaga (Amoeba).